We begin with the raw amino-acid sequence, 166 residues long: EEF1A lysine methyltransferase 1 (166 aa).

This sequence belongs to the class I-like SAM-binding methyltransferase superfamily. EFM5 family.

The protein resides in the cytoplasm. The enzyme catalyses L-lysyl-[protein] + 3 S-adenosyl-L-methionine = N(6),N(6),N(6)-trimethyl-L-lysyl-[protein] + 3 S-adenosyl-L-homocysteine + 3 H(+). Its function is as follows. Protein-lysine methyltransferase that selectively catalyzes the trimethylation of EEF1A at 'Lys-79'. The protein is EEF1A lysine methyltransferase 1 of Danio rerio (Zebrafish).